Reading from the N-terminus, the 1167-residue chain is Topoisomerase 1-associated factor 1 (1167 aa).

Disordered regions lie at residues 332-353, 563-594, 889-969, 981-1093, and 1105-1167; these read SKRW…NNDF, SRRR…DYAE, KYSH…LENT, YVHA…DAID, and FDDD…SDSE. Basic and acidic residues predominate over residues 572-582; sequence REEQLVNKGSD. Acidic residues-rich tracts occupy residues 583-593 and 949-958; these read EEQESEDEDYA and EEEPVDEETL. Basic and acidic residues-rich tracts occupy residues 959 to 969 and 996 to 1013; these read EERRQARLENT and EFFR…ERIK. Residues 1062 to 1074 are compositionally biased toward acidic residues; sequence ELEEDDILMDDME. The span at 1078–1088 shows a compositional bias: polar residues; it reads RASSGEYSSND. Residues 1110 to 1127 show a composition bias toward basic and acidic residues; the sequence is AFGRDRDKDETSVDRDGA.

Belongs to the timeless family.

It is found in the nucleus. Its function is as follows. Involved in chromosome segregation during meiosis and DNA damage repair. This is Topoisomerase 1-associated factor 1 (tof1) from Emericella nidulans (strain FGSC A4 / ATCC 38163 / CBS 112.46 / NRRL 194 / M139) (Aspergillus nidulans).